The chain runs to 243 residues: Large ribosomal subunit protein uL2 (243 aa).

The segment at V198–E243 is disordered. Residues P221–S231 are compositionally biased toward basic and acidic residues.

This sequence belongs to the universal ribosomal protein uL2 family. In terms of assembly, part of the 50S ribosomal subunit. Forms a bridge to the 30S subunit in the 70S ribosome.

In terms of biological role, one of the primary rRNA binding proteins. Required for association of the 30S and 50S subunits to form the 70S ribosome, for tRNA binding and peptide bond formation. It has been suggested to have peptidyltransferase activity; this is somewhat controversial. Makes several contacts with the 16S rRNA in the 70S ribosome. The sequence is that of Large ribosomal subunit protein uL2 from Natronomonas pharaonis (strain ATCC 35678 / DSM 2160 / CIP 103997 / JCM 8858 / NBRC 14720 / NCIMB 2260 / Gabara) (Halobacterium pharaonis).